The following is a 479-amino-acid chain: Probable xyloglucan galactosyltransferase GT15 (479 aa).

Over 1–20 (MKNNNSSSVSIENHPWKKKP) the chain is Cytoplasmic. A helical; Signal-anchor for type II membrane protein membrane pass occupies residues 21–40 (TTLLLFLSLLSISLLLLRLS). Topologically, residues 41 to 479 (QDKIILITTT…GIRRNEFKTD (439 aa)) are lumenal. 4 N-linked (GlcNAc...) asparagine glycosylation sites follow: Asn-155, Asn-242, Asn-285, and Asn-391.

Belongs to the glycosyltransferase 47 family. In terms of tissue distribution, expressed in roots, hypocotyls, cotyledons, leaves, stems and sepals.

The protein resides in the golgi apparatus membrane. Functions in xyloglucan synthesis by adding side chains to the xylosylated glucan backbone. Involved in the galactosylation of hemicellulose xyloglucan. This is Probable xyloglucan galactosyltransferase GT15 from Arabidopsis thaliana (Mouse-ear cress).